Reading from the N-terminus, the 296-residue chain is Ceramide synthase LOH2 (296 aa).

A run of 6 helical transmembrane segments spans residues 19-39 (VWHF…RLVL), 80-100 (LLYY…EPWA), 121-141 (LYYM…LAWE), 158-178 (IILL…IILA), 206-226 (FALF…FWII), and 254-274 (MLLM…AMIV). The TLC domain maps to 71-278 (VKCKESLWKL…ICAMIVRLLK (208 aa)). A phosphoserine mark is found at serine 289 and serine 291.

In terms of tissue distribution, expressed ubiquitously with highest levels in pollen.

It is found in the endoplasmic reticulum membrane. It catalyses the reaction a sphingoid base + hexadecanoyl-CoA = an N-hexadecanoyl-sphingoid base + CoA + H(+). The catalysed reaction is sphinganine + hexadecanoyl-CoA = N-hexadecanoylsphinganine + CoA + H(+). The enzyme catalyses sphing-4-enine + hexadecanoyl-CoA = N-hexadecanoylsphing-4-enine + CoA + H(+). It carries out the reaction sphinga-(4E,8E)-dienine + hexadecanoyl-CoA = N-hexadecanoylsphinga-(4E,8E)-dienine + CoA + H(+). It catalyses the reaction sphinga-(4E,8Z)-dienine + hexadecanoyl-CoA = N-hexadecanoylsphinga-(4E,8Z)-dienine + CoA + H(+). The protein operates within sphingolipid metabolism. With respect to regulation, inhibited by the mycotoxin fumonisin B(1), a sphingosine analog mycotoxins produced by pathogenic fungi. Activated by divalent cation such as magnesium Mg(2+), zinc Zn(2+), manganese Mn(2+) and calcium Ca(2+). Its function is as follows. Prevents cell division in root meristems and promotes salicylic acid (SA) production and hypersensitive response (HR). Catalyzes the biosynthesis of ceramide sphingolipids with C(16) fatty acids, structural membrane lipids involved in membrane trafficking (e.g. early endosomes) and cell polarity (e.g. polar auxin transport related proteins); accepts only C16:0 fatty acids, but with a wide range of d18 sphingoid bases, such as sphinganine (d18:0) and palmitoyl-CoA. Mediates resistance to sphinganine-analog mycotoxins (SAMs, e.g. fumonisin B(1)) by restoring the sphingolipid biosynthesis. Could salvage the transport of GPI-anchored proteins from the endoplasmic reticulum to the Golgi apparatus in ceramides-depleted cells after SAM exposure. Contributes to hypoxic conditions tolerance (e.g. submergences), especially in the dark, by promoting the formation of very-long-chain (VLC) ceramide species (22:1, 24:1 and 26:1) and of VLC unsaturated ceramides, which are modulating CTR1-mediated ethylene signaling leading to endoplasmic reticulum (ER)-to-nucleus translocation of EIN2 and EIN3. The chain is Ceramide synthase LOH2 from Arabidopsis thaliana (Mouse-ear cress).